A 273-amino-acid polypeptide reads, in one-letter code: NAD-dependent protein deacylase (273 aa).

A Deacetylase sirtuin-type domain is found at 20–272 (RERLRQRIFF…PEFVEKLLEG (253 aa)). 48 to 67 (GAGISAESGIRTFRAADGLW) contributes to the NAD(+) binding site. Tyr92 and Arg95 together coordinate substrate. 129–132 (QNID) provides a ligand contact to NAD(+). Catalysis depends on His147, which acts as the Proton acceptor. Residues Cys155 and Cys174 each coordinate Zn(2+). Residues 214-216 (GTS), 240-242 (NLE), and Ala258 contribute to the NAD(+) site.

This sequence belongs to the sirtuin family. Class III subfamily. Requires Zn(2+) as cofactor.

It localises to the cytoplasm. The catalysed reaction is N(6)-acetyl-L-lysyl-[protein] + NAD(+) + H2O = 2''-O-acetyl-ADP-D-ribose + nicotinamide + L-lysyl-[protein]. The enzyme catalyses N(6)-succinyl-L-lysyl-[protein] + NAD(+) + H2O = 2''-O-succinyl-ADP-D-ribose + nicotinamide + L-lysyl-[protein]. It carries out the reaction N(6)-(2-hydroxyisobutanoyl)-L-lysyl-[protein] + NAD(+) + H2O = 2''-O-(2-hydroxyisobutanoyl)-ADP-D-ribose + nicotinamide + L-lysyl-[protein]. In terms of biological role, NAD-dependent lysine deacetylase that specifically removes acetyl groups on target proteins. Also acts as a protein-lysine deacylase by mediating protein desuccinylation and de-2-hydroxyisobutyrylation. Modulates the activities of several proteins which are inactive in their acylated form. In Shigella flexneri, this protein is NAD-dependent protein deacylase.